The sequence spans 140 residues: Small ribosomal subunit protein uS9A (140 aa).

The protein belongs to the universal ribosomal protein uS9 family. Component of the small ribosomal subunit (SSU). Mature yeast ribosomes consist of a small (40S) and a large (60S) subunit. The 40S small subunit contains 1 molecule of ribosomal RNA (18S rRNA) and at least 33 different proteins. The large 60S subunit contains 3 rRNA molecules (25S, 5.8S and 5S rRNA) and at least 46 different proteins.

It localises to the cytoplasm. Functionally, component of the ribosome, a large ribonucleoprotein complex responsible for the synthesis of proteins in the cell. The small ribosomal subunit (SSU) binds messenger RNAs (mRNAs) and translates the encoded message by selecting cognate aminoacyl-transfer RNA (tRNA) molecules. The large subunit (LSU) contains the ribosomal catalytic site termed the peptidyl transferase center (PTC), which catalyzes the formation of peptide bonds, thereby polymerizing the amino acids delivered by tRNAs into a polypeptide chain. The nascent polypeptides leave the ribosome through a tunnel in the LSU and interact with protein factors that function in enzymatic processing, targeting, and the membrane insertion of nascent chains at the exit of the ribosomal tunnel. The chain is Small ribosomal subunit protein uS9A (rps1601) from Schizosaccharomyces pombe (strain 972 / ATCC 24843) (Fission yeast).